The sequence spans 91 residues: Non-specific lipid-transfer protein P5 (91 aa).

4 disulfides stabilise this stretch: C3–C50, C13–C27, C28–C73, and C48–C87.

The protein resides in the secreted. In terms of biological role, plant non-specific lipid-transfer proteins transfer phospholipids as well as galactolipids across membranes. May play a role in wax or cutin deposition in the cell walls of expanding epidermal cells and certain secretory tissues. The chain is Non-specific lipid-transfer protein P5 from Vitis sp. (Grape).